The primary structure comprises 46 residues: Large ribosomal subunit protein bL36 (46 aa).

It belongs to the bacterial ribosomal protein bL36 family.

The polypeptide is Large ribosomal subunit protein bL36 (Serratia proteamaculans (strain 568)).